Here is a 236-residue protein sequence, read N- to C-terminus: Glyoxalase 3 (236 aa).

Residues cysteine 136, histidine 137, and glutamate 168 contribute to the active site. The residue at position 136 (cysteine 136) is a Cysteine sulfinic acid (-SO2H).

Belongs to the peptidase C56 family. HSP31-like subfamily. In terms of assembly, monomer.

It catalyses the reaction methylglyoxal + H2O = (R)-lactate + H(+). Functionally, catalyzes the conversion of methylglyoxal (MG) to D-lactate in a single glutathione (GSH)-independent step. Selective for MG, does not use glyoxal as substrate. Plays a role in detoxifying endogenously produced MG, particularly when glycerol is the principal carbon source. Important for viability in stationary phase. This chain is Glyoxalase 3, found in Candida albicans (strain SC5314 / ATCC MYA-2876) (Yeast).